The following is a 233-amino-acid chain: Leucyl/phenylalanyl-tRNA--protein transferase (233 aa).

The protein belongs to the L/F-transferase family.

Its subcellular location is the cytoplasm. It carries out the reaction N-terminal L-lysyl-[protein] + L-leucyl-tRNA(Leu) = N-terminal L-leucyl-L-lysyl-[protein] + tRNA(Leu) + H(+). The enzyme catalyses N-terminal L-arginyl-[protein] + L-leucyl-tRNA(Leu) = N-terminal L-leucyl-L-arginyl-[protein] + tRNA(Leu) + H(+). It catalyses the reaction L-phenylalanyl-tRNA(Phe) + an N-terminal L-alpha-aminoacyl-[protein] = an N-terminal L-phenylalanyl-L-alpha-aminoacyl-[protein] + tRNA(Phe). Functions in the N-end rule pathway of protein degradation where it conjugates Leu, Phe and, less efficiently, Met from aminoacyl-tRNAs to the N-termini of proteins containing an N-terminal arginine or lysine. This chain is Leucyl/phenylalanyl-tRNA--protein transferase, found in Shewanella denitrificans (strain OS217 / ATCC BAA-1090 / DSM 15013).